Reading from the N-terminus, the 156-residue chain is Small ribosomal subunit protein uS7 (156 aa).

Belongs to the universal ribosomal protein uS7 family. In terms of assembly, part of the 30S ribosomal subunit. Contacts proteins S9 and S11.

Functionally, one of the primary rRNA binding proteins, it binds directly to 16S rRNA where it nucleates assembly of the head domain of the 30S subunit. Is located at the subunit interface close to the decoding center, probably blocks exit of the E-site tRNA. The sequence is that of Small ribosomal subunit protein uS7 from Synechococcus sp. (strain CC9311).